An 88-amino-acid chain; its full sequence is Apolipoprotein C-I (88 aa).

A signal peptide spans 1-26; it reads MRLFISLPILIVVLAMALEGPAPAQA.

It belongs to the apolipoprotein C1 family.

The protein localises to the secreted. Inhibitor of lipoprotein binding to the low density lipoprotein (LDL) receptor, LDL receptor-related protein, and very low density lipoprotein (VLDL) receptor. Associates with high density lipoproteins (HDL) and the triacylglycerol-rich lipoproteins in the plasma and makes up about 10% of the protein of the VLDL and 2% of that of HDL. Appears to interfere directly with fatty acid uptake and is also the major plasma inhibitor of cholesteryl ester transfer protein (CETP). Modulates the interaction of APOE with beta-migrating VLDL and inhibits binding of beta-VLDL to the LDL receptor-related protein. Binds free fatty acids and reduces their intracellular esterification. The polypeptide is Apolipoprotein C-I (Apoc1) (Neotoma lepida (Desert woodrat)).